A 916-amino-acid chain; its full sequence is Calcium homeostasis endoplasmic reticulum protein (916 aa).

The residue at position 1 (Met1) is an N-acetylmethionine. The SURP motif repeat unit spans residues Val15–Lys57. N6-acetyllysine is present on Lys18. Residues Glu149–Gly289 form the CID domain. Disordered regions lie at residues Gln336–Pro549 and His601–Asn635. Over residues Thr354–Thr374 the composition is skewed to pro residues. A compositionally biased stretch (polar residues) spans Trp480 to Glu501. The segment covering Pro525 to Pro541 has biased composition (pro residues). The residue at position 714 (Tyr714) is a Phosphotyrosine. The interval Arg722–Asp878 is disordered. The span at Ser739 to Ser749 shows a compositional bias: basic residues. The segment covering Ser750–Arg766 has biased composition (low complexity). Over residues Ser767 to Ser815 the composition is skewed to basic residues. 3 positions are modified to phosphoserine: Ser813, Ser815, and Ser817. The residue at position 819 (Thr819) is a Phosphothreonine. Position 828 is a phosphoserine (Ser828). Residues Glu841–Asp891 enclose the G-patch domain. A Glycyl lysine isopeptide (Lys-Gly) (interchain with G-Cter in SUMO2) cross-link involves residue Lys844. Residues Ser855 and Ser857 each carry the phosphoserine modification. A Glycyl lysine isopeptide (Lys-Gly) (interchain with G-Cter in SUMO2) cross-link involves residue Lys872. Lys879 is modified (N6-acetyllysine). Ser904 carries the phosphoserine modification.

In terms of tissue distribution, expressed in brain, placenta, lung, liver, kidney, pancreas, cardiac and skeletal muscle, and in cultured HEL and Dami cells.

The protein localises to the cytoplasm. It localises to the perinuclear region. It is found in the endoplasmic reticulum. In terms of biological role, involved in calcium homeostasis, growth and proliferation. The sequence is that of Calcium homeostasis endoplasmic reticulum protein from Homo sapiens (Human).